A 442-amino-acid polypeptide reads, in one-letter code: tRNA modification GTPase MnmE (442 aa).

Positions 27, 84, and 124 each coordinate (6S)-5-formyl-5,6,7,8-tetrahydrofolate. The TrmE-type G domain occupies 221 to 366 (GLHVVIVGAP…LLDALQAFAE (146 aa)). Residues 231-236 (NAGKSS), 250-256 (SEEAGTT), and 275-278 (DTAG) each bind GTP. Residues Ser235 and Thr256 each contribute to the Mg(2+) site. Lys442 is a binding site for (6S)-5-formyl-5,6,7,8-tetrahydrofolate.

Belongs to the TRAFAC class TrmE-Era-EngA-EngB-Septin-like GTPase superfamily. TrmE GTPase family. Homodimer. Heterotetramer of two MnmE and two MnmG subunits. It depends on K(+) as a cofactor.

The protein localises to the cytoplasm. Its function is as follows. Exhibits a very high intrinsic GTPase hydrolysis rate. Involved in the addition of a carboxymethylaminomethyl (cmnm) group at the wobble position (U34) of certain tRNAs, forming tRNA-cmnm(5)s(2)U34. This Brucella abortus (strain 2308) protein is tRNA modification GTPase MnmE.